The primary structure comprises 266 residues: 3-methyl-2-oxobutanoate hydroxymethyltransferase (266 aa).

Mg(2+)-binding residues include Asp-45 and Asp-84. 3-methyl-2-oxobutanoate contacts are provided by residues 45-46 (DS), Asp-84, and Lys-113. Residue Glu-115 participates in Mg(2+) binding. Glu-183 acts as the Proton acceptor in catalysis.

The protein belongs to the PanB family. In terms of assembly, homodecamer; pentamer of dimers. Mg(2+) serves as cofactor.

The protein resides in the cytoplasm. The catalysed reaction is 3-methyl-2-oxobutanoate + (6R)-5,10-methylene-5,6,7,8-tetrahydrofolate + H2O = 2-dehydropantoate + (6S)-5,6,7,8-tetrahydrofolate. Its pathway is cofactor biosynthesis; (R)-pantothenate biosynthesis; (R)-pantoate from 3-methyl-2-oxobutanoate: step 1/2. Catalyzes the reversible reaction in which hydroxymethyl group from 5,10-methylenetetrahydrofolate is transferred onto alpha-ketoisovalerate to form ketopantoate. In Coxiella burnetii (strain Dugway 5J108-111), this protein is 3-methyl-2-oxobutanoate hydroxymethyltransferase.